We begin with the raw amino-acid sequence, 248 residues long: MAGHSQFKNIMHRKGRQDAVRSKLFSKLAREITVAAKMGLPDPNMNARLRAAILAARAENMPKDNIERAIKKASGADMENYDEIRYEGYGPGGVAVIVEALTDNRNRTASEVRSYFTKSGGNLAETGAVSFMFDRLGAIEFDAAKVNADDLLEAAIEAGADDVNSSEETHEVVCAVESLAEVQKALEAKFGEPRKAGLVWRPQNTIAVDDETGEKLMRLVETLEDNDDVQNVTANFELSEALMAKLSA.

Belongs to the TACO1 family.

It is found in the cytoplasm. In Azorhizobium caulinodans (strain ATCC 43989 / DSM 5975 / JCM 20966 / LMG 6465 / NBRC 14845 / NCIMB 13405 / ORS 571), this protein is Probable transcriptional regulatory protein AZC_0510.